The primary structure comprises 175 residues: Transcriptional repressor NrdR (175 aa).

The segment at 3 to 32 is a zinc-finger region; the sequence is CPYCSHPDSKVIDSRDVDDGVRRRRECVVC. The region spanning 47 to 137 is the ATP-cone domain; that stretch reads LFVVKKDQRR…VYREFTDITQ (91 aa).

It belongs to the NrdR family. It depends on Zn(2+) as a cofactor.

Negatively regulates transcription of bacterial ribonucleotide reductase nrd genes and operons by binding to NrdR-boxes. This is Transcriptional repressor NrdR from Dehalococcoides mccartyi (strain CBDB1).